The sequence spans 285 residues: Protein FD (285 aa).

The segment covering 1–12 has biased composition (basic residues); the sequence is MLSSAKHQRNHR. Disordered stretches follow at residues 1–59, 79–107, 115–134, 198–236, and 257–285; these read MLSS…QKRS, NRHS…NSIF, LNQE…NGDS, SSSF…ARKQ, and KRQQ…TAPF. Residues 13-25 are compositionally biased toward polar residues; that stretch reads LSATNKNQTLTKV. Over residues 26-50 the composition is skewed to low complexity; it reads SSISSSSPSSSSSSSSTSSSSPLPS. Polar residues predominate over residues 98–107; the sequence is HHNQNPNSIF. The 64-residue stretch at 214–277 folds into the bZIP domain; sequence GNRRHKRMIK…AIQQPKKNTL (64 aa). Residues 216–235 are basic motif; that stretch reads RRHKRMIKNRESAARSRARK. Residues 242 to 263 are leucine-zipper; sequence LELEVAHLQAENARLKRQQDQL. Residues 272–285 show a composition bias toward polar residues; that stretch reads PKKNTLQRSSTAPF. Residue Thr-282 is modified to Phosphothreonine.

It belongs to the bZIP family. As to quaternary structure, self-interacts. Interacts with FT and FDP/BZIP27. Interacts with GRF3 and GRF4, and in a calcium-independent manner, with CPK6 and CPK33. In terms of processing, phosphorylated at Thr-282 in a calcium-dependent manner by CPK6 and CPK33. As to expression, highly expressed in shoot apex.

It is found in the nucleus. In terms of biological role, transcription factor required for the transition to flowering promoted by FT. This is Protein FD from Arabidopsis thaliana (Mouse-ear cress).